The following is a 373-amino-acid chain: Mannitol-1-phosphate 5-dehydrogenase (373 aa).

3–14 (ALHFGAGNIGRG) contacts NAD(+).

It belongs to the mannitol dehydrogenase family.

The enzyme catalyses D-mannitol 1-phosphate + NAD(+) = beta-D-fructose 6-phosphate + NADH + H(+). In Bacillus subtilis (strain 168), this protein is Mannitol-1-phosphate 5-dehydrogenase (mtlD).